A 373-amino-acid polypeptide reads, in one-letter code: Cell surface Cu-only superoxide dismutase ARB_03674 (373 aa).

The N-terminal stretch at 1–55 (MIWKQPPRRMGEMGGSLSRRFGNAAASWAVWRVSRSCFSLLFFFYFFLFFSSSSL) is a signal peptide. N-linked (GlcNAc...) asparagine glycosylation is found at asparagine 75 and asparagine 141. Cu cation contacts are provided by histidine 194, histidine 196, and histidine 212. A disulfide bridge connects residues cysteine 206 and cysteine 289. 2 N-linked (GlcNAc...) asparagine glycosylation sites follow: asparagine 254 and asparagine 274. Histidine 280 contacts Cu cation. Asparagine 283 and asparagine 291 each carry an N-linked (GlcNAc...) asparagine glycan. The segment at 329-348 (GHAPTISATYTPTPTPSPPA) is disordered. Residues 331 to 340 (APTISATYTP) show a composition bias toward low complexity. The GPI-anchor amidated glycine moiety is linked to residue glycine 352. Residues 353–373 (AGRLVGFSLGAIMAALVPLAL) constitute a propeptide, removed in mature form.

This sequence belongs to the Cu-Zn superoxide dismutase family. Monomer. The cofactor is Cu cation. Post-translationally, the GPI-anchor is attached to the protein in the endoplasmic reticulum and serves to target the protein to the cell surface. There, the glucosamine-inositol phospholipid moiety is cleaved off and the GPI-modified mannoprotein is covalently attached via its lipidless GPI glycan remnant to the 1,6-beta-glucan of the outer cell wall layer.

The protein resides in the secreted. It is found in the cell wall. Its subcellular location is the cell membrane. The catalysed reaction is 2 superoxide + 2 H(+) = H2O2 + O2. Functionally, superoxide dismutases serve to convert damaging superoxide radicals, a key form of ROS, to less damaging hydrogen peroxide that can be converted into water by catalase action. Degrades host-derived reactive oxygen species to escape innate immune surveillance. Involved in the occurrence of miconazole-tolerant persisters in biofilms. Persisters are cells that survive high doses of an antimicrobial agent. The unusual attributes of SOD5-like fungal proteins, including the absence of zinc and an open active site that readily captures extracellular copper, make these SODs well suited to meet challenges in zinc and copper availability at the host-pathogen interface. The polypeptide is Cell surface Cu-only superoxide dismutase ARB_03674 (Arthroderma benhamiae (strain ATCC MYA-4681 / CBS 112371) (Trichophyton mentagrophytes)).